A 112-amino-acid chain; its full sequence is T cell receptor alpha variable 34 (112 aa).

A signal peptide spans 1-21 (METVLQVLLGILGFQAAWVSS). The 91-residue stretch at 22–112 (QELEQSPQSL…HAGIYLCGAD (91 aa)) folds into the Ig-like domain. Asn-38 and Asn-42 each carry an N-linked (GlcNAc...) asparagine glycan. The cysteines at positions 43 and 109 are disulfide-linked.

In terms of assembly, alpha-beta TR is a heterodimer composed of an alpha and beta chain; disulfide-linked. The alpha-beta TR is associated with the transmembrane signaling CD3 coreceptor proteins to form the TR-CD3 (TcR or TCR). The assembly of alpha-beta TR heterodimers with CD3 occurs in the endoplasmic reticulum where a single alpha-beta TR heterodimer associates with one CD3D-CD3E heterodimer, one CD3G-CD3E heterodimer and one CD247 homodimer forming a stable octameric structure. CD3D-CD3E and CD3G-CD3E heterodimers preferentially associate with TR alpha and TR beta chains, respectively. The association of the CD247 homodimer is the last step of TcR assembly in the endoplasmic reticulum and is required for transport to the cell surface.

Its subcellular location is the cell membrane. Its function is as follows. V region of the variable domain of T cell receptor (TR) alpha chain that participates in the antigen recognition. Alpha-beta T cell receptors are antigen specific receptors which are essential to the immune response and are present on the cell surface of T lymphocytes. Recognize peptide-major histocompatibility (MH) (pMH) complexes that are displayed by antigen presenting cells (APC), a prerequisite for efficient T cell adaptive immunity against pathogens. Binding of alpha-beta TR to pMH complex initiates TR-CD3 clustering on the cell surface and intracellular activation of LCK that phosphorylates the ITAM motifs of CD3G, CD3D, CD3E and CD247 enabling the recruitment of ZAP70. In turn ZAP70 phosphorylates LAT, which recruits numerous signaling molecules to form the LAT signalosome. The LAT signalosome propagates signal branching to three major signaling pathways, the calcium, the mitogen-activated protein kinase (MAPK) kinase and the nuclear factor NF-kappa-B (NF-kB) pathways, leading to the mobilization of transcription factors that are critical for gene expression and essential for T cell growth and differentiation. The T cell repertoire is generated in the thymus, by V-(D)-J rearrangement. This repertoire is then shaped by intrathymic selection events to generate a peripheral T cell pool of self-MH restricted, non-autoaggressive T cells. Post-thymic interaction of alpha-beta TR with the pMH complexes shapes TR structural and functional avidity. In Homo sapiens (Human), this protein is T cell receptor alpha variable 34.